A 364-amino-acid chain; its full sequence is Nuclear hormone receptor family member nhr-53 (364 aa).

The nuclear receptor DNA-binding region spans 20-95 (PSYCLICCEV…VGMQRSSVQQ (76 aa)). NR C4-type zinc fingers lie at residues 23–43 (CLIC…CRAC) and 59–83 (CPKN…YEKC). One can recognise an NR LBD domain in the interval 110-363 (REEPVLDTMR…KNLYDMFSPT (254 aa)).

Belongs to the nuclear hormone receptor family.

It is found in the nucleus. Its function is as follows. Orphan nuclear receptor. The sequence is that of Nuclear hormone receptor family member nhr-53 (nhr-53) from Caenorhabditis elegans.